An 876-amino-acid chain; its full sequence is uncharacterized protein (876 aa).

Residues 37 to 48 (DEDKSNNDDRRS) are compositionally biased toward basic and acidic residues. Disordered stretches follow at residues 37-67 (DEDKSNNDDRRSLASILDSSSSVKKKGKGSN), 112-155 (DESG…RNIK), 226-254 (KKKSSEGATPTIKFNPPIEDGFTPLTKSQ), and 330-353 (MMMDDSRSVSSARRSRSRSRSRSI). Phosphoserine occurs at positions 48 and 51. The span at 49–58 (LASILDSSSS) shows a compositional bias: low complexity. A compositionally biased stretch (polar residues) spans 115 to 131 (GFTSDNNADYFSGNSYS). 4 positions are modified to phosphoserine: S360, S510, S552, and S577. Residues 490-513 (PEVTKQKNTSGPKPGFSHSKSADA) are disordered. 2 disordered regions span residues 661–728 (ITGG…RSPQ) and 750–876 (RHSL…FGRL). Positions 689-699 (SKSKSRSSSKS) are enriched in basic residues. A compositionally biased stretch (low complexity) spans 717 to 726 (SSASASRSRS). Phosphoserine is present on S775. Low complexity-rich tracts occupy residues 794–808 (NKDSSLRKVSSSSSL) and 842–854 (FSFFKSKSRSPSS).

This is an uncharacterized protein from Saccharomyces cerevisiae (strain ATCC 204508 / S288c) (Baker's yeast).